The primary structure comprises 744 residues: Merozoite surface protein 9 (744 aa).

The signal sequence occupies residues 1–23; it reads MMNMKIVLFSLLLFVIRWNIISC. The interaction with MSP1 and host SLC4A1/Band 3 stretch occupies residues 77-235; that stretch reads KELLKEKQYT…VNDEDDVNDE (159 aa). Disordered regions lie at residues 202–282, 459–487, 512–540, and 666–744; these read KSQG…ATAY, DNQA…PTED, NNTP…ENFD, and VDAL…EESK. Residues 211-224 show a composition bias toward polar residues; the sequence is SQNQNENNDNQKYQ. Repeat copies occupy residues 226–231, 232–237, 238–243, 244–249, 250–255, 256–261, 262–267, and 268–273. Residues 226-273 are 8 X 6 AA tandem repeats of [VT]-N-D-[ED]-[ED]-D; it reads VNDEDDVNDEEDTNDDEDTNDEEDTNDDEDTNDDEDTNDEEDTNDEED. A compositionally biased stretch (acidic residues) spans 226–274; sequence VNDEDDVNDEEDTNDDEDTNDEEDTNDDEDTNDDEDTNDEEDTNDEEDH. The tract at residues 364 to 528 is interaction with MSP1 and host SLC4A1/Band 3; it reads LKDNLINYEF…PPTQSKKKNK (165 aa). Positions 459–473 are enriched in basic and acidic residues; it reads DNQAVDTKSMEEPKV. A compositionally biased stretch (low complexity) spans 512–521; sequence NNTPNVVPPT. The stretch at 644–734 forms a coiled coil; the sequence is NQETEEEMEK…QEEEEEEEIV (91 aa). 2 stretches are compositionally biased toward basic and acidic residues: residues 672 to 698 and 706 to 719; these read KNKE…KEKE and EKEK…KEEK. Positions 720-734 are enriched in acidic residues; that stretch reads EKEEEQEEEEEEEIV.

This sequence belongs to the plasmodium ABRA family. As to quaternary structure, forms a complex composed of MSP1, MSP6, MSP7, MSP9 and MSP3; within the complex, MSP6 and MSP9 mediate the binding to the host erythrocyte. Interacts with MSP1 subunits p19 and p42; the interaction is direct. Interacts with host SLC4A1/Band 3 protein (via the 5ABC region). MSP1 subunits p19 or p42, and MSP9 form a co-ligand complex that interacts with host SLC4A1/Band 3 protein. Not glycosylated.

It localises to the cell membrane. The protein localises to the parasitophorous vacuole lumen. It is found in the secreted. In terms of biological role, during the asexual blood stage, involved in the sialic acid-independent (SAID) merozoite invasion of host erythrocytes by binding to host SLC4A1/Band 3 protein on the surface of the host erythrocyte. The sequence is that of Merozoite surface protein 9 from Plasmodium falciparum (isolate 7G8).